The sequence spans 30 residues: Cliotide T6 (30 aa).

A cross-link (cyclopeptide (Ser-Asn)) is located at residues 1–30 (SIPCGESCVYIPCITTIVGCSCKDKVCYKN). Intrachain disulfides connect Cys-4–Cys-20, Cys-8–Cys-22, and Cys-13–Cys-27.

Post-translationally, contains 3 disulfide bonds. In terms of processing, this is a cyclic peptide. As to expression, expressed in pod but not in flower, stem, shoot, leaf, seed, root and nodule (at protein level).

Functionally, probably participates in a plant defense mechanism. This is Cliotide T6 from Clitoria ternatea (Butterfly pea).